Consider the following 938-residue polypeptide: Isoleucine--tRNA ligase (938 aa).

Residues 58 to 68 carry the 'HIGH' region motif; that stretch reads PYANGSIHIGH. Lysine 183 is subject to N6-acetyllysine. Position 561 (glutamate 561) interacts with L-isoleucyl-5'-AMP. The short motif at 602-606 is the 'KMSKS' region element; that stretch reads KMSKS. Position 605 (lysine 605) interacts with ATP. Zn(2+)-binding residues include cysteine 901, cysteine 904, cysteine 921, and cysteine 924.

It belongs to the class-I aminoacyl-tRNA synthetase family. IleS type 1 subfamily. As to quaternary structure, monomer. Zn(2+) is required as a cofactor.

The protein localises to the cytoplasm. It carries out the reaction tRNA(Ile) + L-isoleucine + ATP = L-isoleucyl-tRNA(Ile) + AMP + diphosphate. Catalyzes the attachment of isoleucine to tRNA(Ile). As IleRS can inadvertently accommodate and process structurally similar amino acids such as valine, to avoid such errors it has two additional distinct tRNA(Ile)-dependent editing activities. One activity is designated as 'pretransfer' editing and involves the hydrolysis of activated Val-AMP. The other activity is designated 'posttransfer' editing and involves deacylation of mischarged Val-tRNA(Ile). The chain is Isoleucine--tRNA ligase from Escherichia coli O6:K15:H31 (strain 536 / UPEC).